The sequence spans 479 residues: Acetylcholine receptor subunit alpha-type acr-15 (479 aa).

The N-terminal stretch at 1–18 (MLLPILLHFLLLITQLNG) is a signal peptide. At 19 to 230 (SPAEVRLIND…HLRRRTLYYS (212 aa)) the chain is on the extracellular side. Residues Asn-60 and Asn-92 are each glycosylated (N-linked (GlcNAc...) asparagine). Cys-146 and Cys-160 form a disulfide bridge. N-linked (GlcNAc...) asparagine glycosylation is present at Asn-200. A disulfide bond links Cys-208 and Cys-209. The chain crosses the membrane as a helical span at residues 231-251 (FNLIAPVLLTMILVILGFTVS). Residues 252-257 (PETCEK) lie on the Cytoplasmic side of the membrane. The chain crosses the membrane as a helical span at residues 258–278 (VGLQISVSLAICIFLTIMSEL). Topologically, residues 279 to 285 (TPQTSEA) are extracellular. The helical transmembrane segment at 286-306 (VPLLGVFFHTCNFISVLATSF) threads the bilayer. Residues 307 to 453 (TVYVQSFHFR…WRFAAIVVDR (147 aa)) are Cytoplasmic-facing. A helical membrane pass occupies residues 454 to 474 (LCLLAFSLLIVVVSIIIALRA). Residues 475-479 (PYLFA) lie on the Extracellular side of the membrane.

The protein belongs to the ligand-gated ion channel (TC 1.A.9) family. Acetylcholine receptor (TC 1.A.9.1) subfamily. In terms of tissue distribution, expressed in interneurons, motor neurons, pharyngeal neurons and muscles.

The protein resides in the cell membrane. It is found in the postsynaptic cell membrane. Functionally, after binding acetylcholine, the AChR responds by an extensive change in conformation that affects all subunits and leads to opening of an ion-conducting channel across the plasma membrane. Activity is required in glutamatergic neurons to mediate nicotine-induced and nicotine-motivated behaviors. The sequence is that of Acetylcholine receptor subunit alpha-type acr-15 from Caenorhabditis elegans.